A 758-amino-acid polypeptide reads, in one-letter code: MTTLHFSGFPRVGAFRELKFAQEKYWRKEISEQELLDVAKDLREKNWKHQAAANADYVAVGDFTFYDHILDLQVATGAIPARFGFDSQNLPLEQFFQLARGNKDQFAIEMTKWFDTNYHYLVPEFHADTEFKANAKHYVQQLQEAQTLGLKAKPTVVGPLTFLWVGKEKGSVEFDRLSLLPKLLPVYVEILTALVEAGAEWIQIDEPALAVDLPKEWVEAYKDVYATLNKVSAKILLGTYFGSVAEHAALLKSLPVDGLHIDLVRAPEQLDAFAGYDKVLSAGVIDGRNIWRANLNKVLETVGPLQAKLGERLWISSSCSLLHTPFDLSVEEKLKANKPDLYSWLAFTLQKTQELRVLKAALNEGRDSVAEELAASQAAADSRANSSEIHRADVAKRLADLPVNAGQRKSPFADRIKAQQAWLNLPLLPTTNIGSFPQTTEIRQARAAFKKGELSASDYEAAMKKEIALVVEEQEKLDLDVLVHGEAERNDMVEYFGELLSGFAFTQYGWVQSYGSRCVKPPIIFGDVSRPEAMTVAWSTYAQNLTKRPMKGMLTGPVTILQWSFVRNDIPRATVCKQIALALNDEVLDLEKAGIKVIQIDEPAIREGLPLKRADWDAYLNWAGESFRLSSAGCEDSTQIHTHMCYSEFNDILPAIAAMDADVITIETSRSDMELLAAFGEFKYPNDIGPGVYDIHSPRVPTEAEVEHLLRKAIEVVPVERLWVNPDCGLKTRGWKETLEQLQVMMNVTRKLRAELAK.

5-methyltetrahydropteroyltri-L-glutamate contacts are provided by residues 16–19 (RELK) and K112. Residues 433–435 (IGS) and E486 contribute to the L-homocysteine site. L-methionine contacts are provided by residues 433–435 (IGS) and E486. 5-methyltetrahydropteroyltri-L-glutamate contacts are provided by residues 517-518 (RC) and W563. D601 is a binding site for L-homocysteine. Residue D601 coordinates L-methionine. E607 is a binding site for 5-methyltetrahydropteroyltri-L-glutamate. Zn(2+) is bound by residues H643, C645, and E667. The active-site Proton donor is H696. C728 provides a ligand contact to Zn(2+).

The protein belongs to the vitamin-B12 independent methionine synthase family. Requires Zn(2+) as cofactor.

It catalyses the reaction 5-methyltetrahydropteroyltri-L-glutamate + L-homocysteine = tetrahydropteroyltri-L-glutamate + L-methionine. It participates in amino-acid biosynthesis; L-methionine biosynthesis via de novo pathway; L-methionine from L-homocysteine (MetE route): step 1/1. Its function is as follows. Catalyzes the transfer of a methyl group from 5-methyltetrahydrofolate to homocysteine resulting in methionine formation. The polypeptide is 5-methyltetrahydropteroyltriglutamate--homocysteine methyltransferase (Neisseria gonorrhoeae (strain ATCC 700825 / FA 1090)).